A 544-amino-acid polypeptide reads, in one-letter code: Shootin-1 (544 aa).

Coiled-coil stretches lie at residues 17-100 (SNQV…LKRK), 141-184 (IVIT…EKHD), and 259-349 (EALQ…QVSN). The disordered stretch occupies residues 343–544 (KLQQVSNPPT…TTTICTEQLS (202 aa)). Residues 352-371 (TAAPAPPPPPPPPPPPPPPS) show a composition bias toward pro residues. Positions 372-383 (SSSSNPLSSLLS) are enriched in low complexity. Residues 397-412 (LVEKDSSEKSPEKDVR) are compositionally biased toward basic and acidic residues. The span at 469–479 (SSSPGPRPPSP) shows a compositional bias: pro residues. A coiled-coil region spans residues 480 to 504 (SEKSELEKALQRRREAVKSAKNNTN). Residues 481-497 (EKSELEKALQRRREAVK) are compositionally biased toward basic and acidic residues. A compositionally biased stretch (polar residues) spans 499 to 544 (AKNNTNPSSVVDLTQIKQTRSEPGQNTGDQETLRHTTTTICTEQLS).

It belongs to the shootin family.

The protein resides in the perikaryon. The protein localises to the cell projection. It localises to the axon. It is found in the growth cone. Its subcellular location is the cytoplasm. The protein resides in the cytoskeleton. The protein localises to the filopodium. It localises to the lamellipodium. Its function is as follows. Involved in the generation of internal asymmetric signals required for neuronal polarization and neurite outgrowth. The polypeptide is Shootin-1 (Danio rerio (Zebrafish)).